The sequence spans 445 residues: Homoserine O-succinyltransferase (445 aa).

The AB hydrolase-1 domain maps to 45 to 411 (NAVLICHALS…APHGHDSFLF (367 aa)). S153 acts as the Nucleophile in catalysis. Residue R223 coordinates substrate. Residues D373 and H406 contribute to the active site. D407 is a binding site for substrate.

This sequence belongs to the AB hydrolase superfamily. MetX family. In terms of assembly, homodimer.

The protein resides in the cytoplasm. It catalyses the reaction L-homoserine + succinyl-CoA = O-succinyl-L-homoserine + CoA. It functions in the pathway amino-acid biosynthesis; L-methionine biosynthesis via de novo pathway; O-succinyl-L-homoserine from L-homoserine: step 1/1. Functionally, transfers a succinyl group from succinyl-CoA to L-homoserine, forming succinyl-L-homoserine. The polypeptide is Homoserine O-succinyltransferase (Psychrobacter arcticus (strain DSM 17307 / VKM B-2377 / 273-4)).